Here is a 257-residue protein sequence, read N- to C-terminus: MPKIGIIGGSGVYGVFEPKEVVKIHTPYGRPSAPVEIGEIEGVEVAFIPRHGKYHEFPPHEVPYRANIWALYELGVERIIAINAVGSLKEEYKPGDIVIIDQFIDFTKKREYTFYNGPKVAHVSMADPFCPELRRIFIETAKELGLPVHEKGTYICIEGPRFSTRAESRMFRQFADVIGMTLVPEVNLARELGMCYVNISTVTDYDVWAEKPVNAQEVLRVMKENEEKVQKLLRKAIPKIPEERKCGCADVLKTMFV.

Phosphate contacts are provided by residues serine 10 and 50 to 51; that span reads RH. A substrate-binding site is contributed by methionine 180. Position 181 (threonine 181) interacts with phosphate. 204–206 contributes to the substrate binding site; that stretch reads DYD.

This sequence belongs to the PNP/MTAP phosphorylase family. MTAP subfamily. Homohexamer. Dimer of a homotrimer.

It carries out the reaction S-methyl-5'-thioadenosine + phosphate = 5-(methylsulfanyl)-alpha-D-ribose 1-phosphate + adenine. Its pathway is amino-acid biosynthesis; L-methionine biosynthesis via salvage pathway; S-methyl-5-thio-alpha-D-ribose 1-phosphate from S-methyl-5'-thioadenosine (phosphorylase route): step 1/1. Functionally, catalyzes the reversible phosphorylation of S-methyl-5'-thioadenosine (MTA) to adenine and 5-methylthioribose-1-phosphate. Involved in the breakdown of MTA, a major by-product of polyamine biosynthesis. Responsible for the first step in the methionine salvage pathway after MTA has been generated from S-adenosylmethionine. Has broad substrate specificity with 6-aminopurine nucleosides as preferred substrates. This is S-methyl-5'-thioadenosine phosphorylase (mntP) from Pyrococcus abyssi (strain GE5 / Orsay).